A 1083-amino-acid polypeptide reads, in one-letter code: DNA-directed RNA polymerase subunit beta (1083 aa).

The protein belongs to the RNA polymerase beta chain family. In plastids the minimal PEP RNA polymerase catalytic core is composed of four subunits: alpha, beta, beta', and beta''. When a (nuclear-encoded) sigma factor is associated with the core the holoenzyme is formed, which can initiate transcription.

Its subcellular location is the plastid. It is found in the chloroplast. It catalyses the reaction RNA(n) + a ribonucleoside 5'-triphosphate = RNA(n+1) + diphosphate. Its function is as follows. DNA-dependent RNA polymerase catalyzes the transcription of DNA into RNA using the four ribonucleoside triphosphates as substrates. The sequence is that of DNA-directed RNA polymerase subunit beta from Acorus calamus var. americanus (American sweet flag).